The chain runs to 235 residues: NADH-quinone oxidoreductase subunit B 2 (235 aa).

The segment covering 1 to 14 (MGLTSRPTPASRQP) has biased composition (low complexity). The segment at 1–24 (MGLTSRPTPASRQPASPPPADPVL) is disordered. Positions 63, 64, 129, and 159 each coordinate [4Fe-4S] cluster. The disordered stretch occupies residues 188–235 (TGATGGGPSTDALRSGLVAAPTAPGPTAPASTAPGPTAPAPTQDEERR).

It belongs to the complex I 20 kDa subunit family. NDH-1 is composed of 14 different subunits. Subunits NuoB, C, D, E, F, and G constitute the peripheral sector of the complex. [4Fe-4S] cluster serves as cofactor.

It localises to the cell membrane. It catalyses the reaction a quinone + NADH + 5 H(+)(in) = a quinol + NAD(+) + 4 H(+)(out). Functionally, NDH-1 shuttles electrons from NADH, via FMN and iron-sulfur (Fe-S) centers, to quinones in the respiratory chain. The immediate electron acceptor for the enzyme in this species is believed to be a menaquinone. Couples the redox reaction to proton translocation (for every two electrons transferred, four hydrogen ions are translocated across the cytoplasmic membrane), and thus conserves the redox energy in a proton gradient. The polypeptide is NADH-quinone oxidoreductase subunit B 2 (Streptomyces griseus subsp. griseus (strain JCM 4626 / CBS 651.72 / NBRC 13350 / KCC S-0626 / ISP 5235)).